A 111-amino-acid polypeptide reads, in one-letter code: Large ribosomal subunit protein uL24 (111 aa).

This sequence belongs to the universal ribosomal protein uL24 family. Part of the 50S ribosomal subunit.

In terms of biological role, one of two assembly initiator proteins, it binds directly to the 5'-end of the 23S rRNA, where it nucleates assembly of the 50S subunit. Functionally, one of the proteins that surrounds the polypeptide exit tunnel on the outside of the subunit. The chain is Large ribosomal subunit protein uL24 from Chlamydia muridarum (strain MoPn / Nigg).